The sequence spans 939 residues: Phosphoenolpyruvate carboxylase (939 aa).

Residues His151 and Lys593 contribute to the active site.

This sequence belongs to the PEPCase type 1 family. It depends on Mg(2+) as a cofactor.

The enzyme catalyses oxaloacetate + phosphate = phosphoenolpyruvate + hydrogencarbonate. Forms oxaloacetate, a four-carbon dicarboxylic acid source for the tricarboxylic acid cycle. This is Phosphoenolpyruvate carboxylase from Gloeobacter violaceus (strain ATCC 29082 / PCC 7421).